The primary structure comprises 388 residues: Galactokinase (388 aa).

33 to 36 (EHTD) provides a ligand contact to substrate. ATP is bound by residues S67 and 125–131 (GSGLSSS). Mg(2+) is bound by residues S131 and E163. D175 acts as the Proton acceptor in catalysis. Y225 contributes to the substrate binding site.

The protein belongs to the GHMP kinase family. GalK subfamily.

The protein resides in the cytoplasm. The enzyme catalyses alpha-D-galactose + ATP = alpha-D-galactose 1-phosphate + ADP + H(+). It functions in the pathway carbohydrate metabolism; galactose metabolism. In terms of biological role, catalyzes the transfer of the gamma-phosphate of ATP to D-galactose to form alpha-D-galactose-1-phosphate (Gal-1-P). The polypeptide is Galactokinase (Lactobacillus helveticus (Lactobacillus suntoryeus)).